Reading from the N-terminus, the 109-residue chain is Transcription initiation factor IIA subunit 2 (109 aa).

Belongs to the TFIIA subunit 2 family. As to quaternary structure, TFIIA is a heterodimer of the large unprocessed subunit 1 and a small subunit gamma. It was originally believed to be a heterotrimer of an alpha (p35), a beta (p19) and a gamma subunit (p12). Interacts with NCOA6 general coactivator. TFIIA forms a complex with TBP. Interacts with HSF1 (via transactivation domain). Part of TBP-based Pol II pre-initiation complex (PIC), in which Pol II core assembles with general transcription factors and other specific initiation factors including GTF2E1, GTF2E2, GTF2F1, GTF2F2, TCEA1, ERCC2, ERCC3, GTF2H2, GTF2H3, GTF2H4, GTF2H5, GTF2A1, GTF2A2, GTF2B and TBP; this large multi-subunit PIC complex mediates DNA unwinding and targets Pol II core to the transcription start site where the first phosphodiester bond forms. (Microbial infection) Interacts with SV40 Large T antigen.

It is found in the nucleus. TFIIA is a component of the transcription machinery of RNA polymerase II and plays an important role in transcriptional activation. TFIIA in a complex with TBP mediates transcriptional activity. The sequence is that of Transcription initiation factor IIA subunit 2 (GTF2A2) from Homo sapiens (Human).